Consider the following 119-residue polypeptide: Holo-[acyl-carrier-protein] synthase (119 aa).

The Mg(2+) site is built by D8 and E58.

This sequence belongs to the P-Pant transferase superfamily. AcpS family. Requires Mg(2+) as cofactor.

The protein localises to the cytoplasm. It carries out the reaction apo-[ACP] + CoA = holo-[ACP] + adenosine 3',5'-bisphosphate + H(+). In terms of biological role, transfers the 4'-phosphopantetheine moiety from coenzyme A to a Ser of acyl-carrier-protein. This Halalkalibacterium halodurans (strain ATCC BAA-125 / DSM 18197 / FERM 7344 / JCM 9153 / C-125) (Bacillus halodurans) protein is Holo-[acyl-carrier-protein] synthase.